Reading from the N-terminus, the 317-residue chain is E3 ubiquitin-protein ligase NRDP1 (317 aa).

The segment at 18–57 (CPICSGVLEEPVQAPHCEHAFCNACITQWFSQQQTCPVDR) adopts an RING-type; degenerate zinc-finger fold. Residues 135–175 (IKHLRSVVQQQQIRIGELEKTAAESKHQLSEQKRDIQLLKA) are a coiled coil.

It catalyses the reaction S-ubiquitinyl-[E2 ubiquitin-conjugating enzyme]-L-cysteine + [acceptor protein]-L-lysine = [E2 ubiquitin-conjugating enzyme]-L-cysteine + N(6)-ubiquitinyl-[acceptor protein]-L-lysine.. Its pathway is protein modification; protein ubiquitination. In terms of biological role, acts as E3 ubiquitin-protein ligase and regulates the degradation of target proteins. The polypeptide is E3 ubiquitin-protein ligase NRDP1 (rnf41) (Xenopus laevis (African clawed frog)).